Reading from the N-terminus, the 908-residue chain is Serine/threonine-protein kinase WARTS homolog (908 aa).

A coiled-coil region spans residues Glu-42–Ser-70. 2 stretches are compositionally biased toward low complexity: residues Val-115–Ser-125 and Pro-168–Glu-181. Disordered regions lie at residues Val-115–Lys-134, Met-162–Ser-183, Asn-203–Pro-225, and Lys-388–Pro-412. Over residues Gln-392 to Pro-404 the composition is skewed to pro residues. Positions Tyr-439–Leu-470 form a coiled coil. Positions Phe-502–Phe-807 constitute a Protein kinase domain. ATP is bound by residues Ile-508–Val-516 and Lys-531. Catalysis depends on Asp-625, which acts as the Proton acceptor. In terms of domain architecture, AGC-kinase C-terminal spans Arg-808–Gly-874.

Belongs to the protein kinase superfamily. AGC Ser/Thr protein kinase family. Interacts (via N-terminus) with yap-1 (via WW domain). The cofactor is Mg(2+). Expressed in muscles and epithelial tissues including pharynx, intestine and hypodermis. Expressed in vulval and spermathecal seam cells.

Its subcellular location is the cytoplasm. It localises to the apical cell membrane. It catalyses the reaction L-seryl-[protein] + ATP = O-phospho-L-seryl-[protein] + ADP + H(+). The enzyme catalyses L-threonyl-[protein] + ATP = O-phospho-L-threonyl-[protein] + ADP + H(+). Its function is as follows. Phosphorylates yap-1 which may negatively regulate yap-1 nuclear localization. Plays an essential role in larval development. Regulates growth, the formation of gut granules, lifespan and cell and body sizes probably in synergy with the TGF-beta sma/mab pathway. Does not appear to regulate apoptosis and proliferation. In addition, may synergize with the TGF-beta daf-7 dauer pathway to regulate entry into the dauer stage. Maintains the cellular integrity of intestinal cells by regulating the localization of apical actin and junctional proteins. This Caenorhabditis elegans protein is Serine/threonine-protein kinase WARTS homolog.